Consider the following 541-residue polypeptide: Chaperonin GroEL (541 aa).

ATP-binding positions include 29-32 (TLGP), 86-90 (DGTTT), Gly-413, and Asp-495.

Forms a cylinder of 14 subunits composed of two heptameric rings stacked back-to-back. Interacts with the co-chaperonin GroES.

The protein resides in the cytoplasm. The enzyme catalyses ATP + H2O + a folded polypeptide = ADP + phosphate + an unfolded polypeptide.. Its function is as follows. Together with its co-chaperonin GroES, plays an essential role in assisting protein folding. The GroEL-GroES system forms a nano-cage that allows encapsulation of the non-native substrate proteins and provides a physical environment optimized to promote and accelerate protein folding. The protein is Chaperonin GroEL of Thermoanaerobacter brockii (Thermoanaerobium brockii).